We begin with the raw amino-acid sequence, 541 residues long: Protein panoramix (541 aa).

Residues 1–169 (MEAPMKLEVK…TLVPDEQQSF (169 aa)) form an interaction with Piwi region. Disordered regions lie at residues 52–75 (SDPE…LQPS) and 198–281 (TAEN…TELD). Residues 194–216 (MLEMTAENRKVKHKKKKHKKERS) are a coiled coil. A compositionally biased stretch (basic residues) spans 203–220 (KVKHKKKKHKKERSHRSN). Basic and acidic residues-rich tracts occupy residues 241–251 (DDKNQFDCDYR) and 269–279 (SSKERKLRDTE). A nxf2-interacting region (NIR) region spans residues 315-343 (LSKADKRSLAVARAELVLEQIQQKANKEE). Positions 323-343 (LAVARAELVLEQIQQKANKEE) form a coiled coil. The interval 387–446 (TPGTRIDLSKWGLETVPEATKRLLRLLGIDVARLKELQSTVKPSQRILKLKKEQLEQGLA) is necessary for interaction with nxf2 and protein stability.

In the ovaries, part of a complex composed of at least Panx, nxf2, piwi and Nxt1. The complex is knowns as Panx-induced cotranscriptional silencing (PICTS) complex, Panx-nxf2-dependent TAP/p15 silencing (Pandas complex), SFiNX (silencing factor interacting nuclear export variant) or piwi-Panx-nxf2-p15 (PPNP) complex. Interacts (via NIR region) with nxf2 (via TAP-C domain); the interaction is direct. Expressed in female gonads (at protein level).

It is found in the nucleus. Its function is as follows. Acts via the piwi-interacting RNA (piRNA) pathway which mediates the repression of transposable elements during meiosis by forming complexes composed of piRNAs and piwi proteins and governs the methylation and subsequent repression of transposons. Required for transcriptional silencing of transposons targeted by piwi and confers its effects by interacting with nascent RNA transcripts. Likely to be recruited to nascent transcripts cotranscriptionally by piwi and to recruit additional factors involved in transcriptional silencing. In the ovaries, forms a complex with nxf2, piwi and Nxt1 which acts as effectors of cotranscriptional transposon silencing. The interaction with nxf2 stabilizes the nuclear protein complex. This chain is Protein panoramix, found in Drosophila melanogaster (Fruit fly).